Reading from the N-terminus, the 308-residue chain is Putative S-adenosyl-L-methionine-dependent methyltransferase Mjls_1073 (308 aa).

Residues aspartate 133 and 162 to 163 contribute to the S-adenosyl-L-methionine site; that span reads DL.

This sequence belongs to the UPF0677 family.

In terms of biological role, exhibits S-adenosyl-L-methionine-dependent methyltransferase activity. The polypeptide is Putative S-adenosyl-L-methionine-dependent methyltransferase Mjls_1073 (Mycobacterium sp. (strain JLS)).